We begin with the raw amino-acid sequence, 154 residues long: Proline dehydrogenase transcriptional activator (154 aa).

The region spanning isoleucine 5–isoleucine 66 is the HTH asnC-type domain. The H-T-H motif DNA-binding region spans valine 24 to arginine 43.

Transcriptional activator of the putA gene in response to proline. In Rhodobacter capsulatus (Rhodopseudomonas capsulata), this protein is Proline dehydrogenase transcriptional activator (putR).